The primary structure comprises 415 residues: Probable peptidoglycan glycosyltransferase FtsW (415 aa).

The next 11 membrane-spanning stretches (helical) occupy residues 31-51 (PILM…VTSA), 63-83 (FFFV…TVWL), 97-117 (LWIL…GIGH), 133-153 (IQVS…YIAT), 162-182 (ITGM…LLLQ), 185-205 (FGTT…ARAQ), 206-226 (WQMM…VVLS), 245-265 (FGHG…GVWG), 285-305 (FIFA…LIGL), 326-346 (IAGA…ALIN), and 361-381 (LPLM…LGFL).

This sequence belongs to the SEDS family. FtsW subfamily.

It is found in the cell inner membrane. The catalysed reaction is [GlcNAc-(1-&gt;4)-Mur2Ac(oyl-L-Ala-gamma-D-Glu-L-Lys-D-Ala-D-Ala)](n)-di-trans,octa-cis-undecaprenyl diphosphate + beta-D-GlcNAc-(1-&gt;4)-Mur2Ac(oyl-L-Ala-gamma-D-Glu-L-Lys-D-Ala-D-Ala)-di-trans,octa-cis-undecaprenyl diphosphate = [GlcNAc-(1-&gt;4)-Mur2Ac(oyl-L-Ala-gamma-D-Glu-L-Lys-D-Ala-D-Ala)](n+1)-di-trans,octa-cis-undecaprenyl diphosphate + di-trans,octa-cis-undecaprenyl diphosphate + H(+). It functions in the pathway cell wall biogenesis; peptidoglycan biosynthesis. Functionally, peptidoglycan polymerase that is essential for cell division. The polypeptide is Probable peptidoglycan glycosyltransferase FtsW (Halothiobacillus neapolitanus (strain ATCC 23641 / c2) (Thiobacillus neapolitanus)).